Reading from the N-terminus, the 378-residue chain is Atypical chemokine receptor 2 (378 aa).

The Extracellular segment spans residues 1 to 49; sequence MPTVASPLPLTTVGSENSSSIYDYDYLDDMTILVCRKDEVLSFGRVFLP. N-linked (GlcNAc...) asparagine glycosylation occurs at asparagine 17. Residues 50-70 form a helical membrane-spanning segment; the sequence is VVYSLIFVLGLAGNLLLLVVL. Over 71 to 91 the chain is Cytoplasmic; it reads LHSAPRRRTMELYLLNLAVSN. A helical transmembrane segment spans residues 92–112; it reads LLFVVTMPFWAISVAWHWVFG. Over 113 to 117 the chain is Extracellular; sequence SFLCK. Residues cysteine 116 and cysteine 194 are joined by a disulfide bond. A helical transmembrane segment spans residues 118–139; it reads VISTLYSINFYCGIFFITCMSL. Residues 140–161 are Cytoplasmic-facing; sequence DKYLEIVHAQPLHRPKAQFRNL. A helical membrane pass occupies residues 162–182; the sequence is LLIVMVWITSLAISVPEMVFV. Over 183-216 the chain is Extracellular; it reads QIHQTLDGVWHCYADFGGHATIWKLYLRFQLNLL. The chain crosses the membrane as a helical span at residues 217–237; it reads GFLLPLLAMIFFYSRIGCVLV. Over 238–249 the chain is Cytoplasmic; that stretch reads RLRPPGQGRALR. A helical transmembrane segment spans residues 250–270; sequence MAAALVIVFFMLWFPYNLTLF. The Extracellular portion of the chain corresponds to 271–292; it reads LHSLLDLHVFGNCEISHRLDYT. A helical membrane pass occupies residues 293-313; it reads LQVTESLAFSHCCFTPVLYAF. The Cytoplasmic portion of the chain corresponds to 314-378; the sequence is CSHRFRRYLK…SLNKGEMGNT (65 aa). The tract at residues 326–378 is C-terminal cytoplasmic tail; it reads LSVMLRWHQAPGTPSSNHSESSRVTAQEDVVSMNDLGERQSEDSLNKGEMGNT.

Belongs to the G-protein coupled receptor 1 family. Atypical chemokine receptor subfamily. Phosphorylated on serine residues in the C-terminal cytoplasmic tail. Expressed on apoptotic neutrophils (at protein level).

The protein resides in the early endosome. The protein localises to the recycling endosome. It is found in the cell membrane. Functionally, atypical chemokine receptor that controls chemokine levels and localization via high-affinity chemokine binding that is uncoupled from classic ligand-driven signal transduction cascades, resulting instead in chemokine sequestration, degradation, or transcytosis. Also known as interceptor (internalizing receptor) or chemokine-scavenging receptor or chemokine decoy receptor. Acts as a receptor for chemokines including CCL2, CCL3, CCL3L1, CCL4, CCL5, CCL7, CCL8, CCL11, CCL13, CCL17, CCL22, CCL23, CCL24, SCYA2/MCP-1, SCY3/MIP-1-alpha, SCYA5/RANTES and SCYA7/MCP-3. Upon active ligand stimulation, activates a beta-arrestin 1 (ARRB1)-dependent, G protein-independent signaling pathway that results in the phosphorylation of the actin-binding protein cofilin (CFL1) through a RAC1-PAK1-LIMK1 signaling pathway. Activation of this pathway results in up-regulation of ACKR2 from endosomal compartment to cell membrane, increasing its efficiency in chemokine uptake and degradation. By scavenging chemokines in tissues, on the surfaces of lymphatic vessels, and in placenta, plays an essential role in the resolution (termination) of the inflammatory response and in the regulation of adaptive immune responses. Plays a major role in the immune silencing of macrophages during the resolution of inflammation. Acts as a regulator of inflammatory leukocyte interactions with lymphatic endothelial cells (LECs) and is required for immature/mature dendritic cells discrimination by LECs. The polypeptide is Atypical chemokine receptor 2 (Ackr2) (Mus musculus (Mouse)).